Here is a 335-residue protein sequence, read N- to C-terminus: Tetraacyldisaccharide 4'-kinase (335 aa).

58–65 (TVGGSGKT) is an ATP binding site.

This sequence belongs to the LpxK family.

It carries out the reaction a lipid A disaccharide + ATP = a lipid IVA + ADP + H(+). It participates in glycolipid biosynthesis; lipid IV(A) biosynthesis; lipid IV(A) from (3R)-3-hydroxytetradecanoyl-[acyl-carrier-protein] and UDP-N-acetyl-alpha-D-glucosamine: step 6/6. Its function is as follows. Transfers the gamma-phosphate of ATP to the 4'-position of a tetraacyldisaccharide 1-phosphate intermediate (termed DS-1-P) to form tetraacyldisaccharide 1,4'-bis-phosphate (lipid IVA). The chain is Tetraacyldisaccharide 4'-kinase from Shewanella oneidensis (strain ATCC 700550 / JCM 31522 / CIP 106686 / LMG 19005 / NCIMB 14063 / MR-1).